A 288-amino-acid polypeptide reads, in one-letter code: ATP synthase subunit a (288 aa).

The next 6 membrane-spanning stretches (helical) occupy residues 47–67 (LDSM…FWLV), 104–124 (LIAP…LMDL), 157–177 (DPNI…YYSI), 199–219 (PIAK…TLIA), 237–257 (LIFV…SVPW), and 258–278 (AIFH…LTIV).

Belongs to the ATPase A chain family. As to quaternary structure, F-type ATPases have 2 components, CF(1) - the catalytic core - and CF(0) - the membrane proton channel. CF(1) has five subunits: alpha(3), beta(3), gamma(1), delta(1), epsilon(1). CF(0) has three main subunits: a(1), b(2) and c(9-12). The alpha and beta chains form an alternating ring which encloses part of the gamma chain. CF(1) is attached to CF(0) by a central stalk formed by the gamma and epsilon chains, while a peripheral stalk is formed by the delta and b chains.

It localises to the cell inner membrane. Key component of the proton channel; it plays a direct role in the translocation of protons across the membrane. The chain is ATP synthase subunit a from Psychrobacter sp. (strain PRwf-1).